Consider the following 654-residue polypeptide: MSTLLQHAQIDWDDQGRPHSRQYDDVYFAVNEGIEETKHVFLGQTRLAERFANLAPHTCGVIGETGFGTGMNFFCAWQLFDQHAHRDARLHFVSVEKYPLGHADMARAVSLWPELAAYTEPLLEQYVAVHPGFQQFTFANGRVTLTLLIGDVLEQLPQLDAQIDVWFLDGFAPAKNPDMWTPELFAQLARLSHPGTVLGTFTTTGWVRRSLVEAGFAMKKVPGIGKKWEVMSGAYVGPVPGPKAPWYARPAVAQGPREALVIGAGLAGSTTAASLARRGWQVTVLERHEAPAQEASGNPQGVLYLKLSAHGTALSQMILSGFGYTRRQLQRLQRGQDWDACGVLQLAFDAKEAERQGKLAAAFDHDLLHALERAEAEAIAGVALPAGGLFYPEGGWVHPPALCQQQLQHPGIRLLTHQDVIELRNIGQHWQAWAGDRLLASAPVVVLAGAADVRRFEPCAQLPLKRIRGQITRLPATASSRALRTVVCAEGYVAPPRGDEHTLGASFDFHSEDLAPTVAEHQGNLALLDEISVDLAQRLGVAELDAEQLQGRAAFRCTSPDYLPIVGPLADSQAFAEAYAVLGRDARQVPDVACPWLGGLYVNSGHGSRGLITAPLSGELVAAWVCGEPLPLPRAVAEACHPNRFALRRLIRGK.

The tract at residues Met1–Val236 is tRNA (mnm(5)s(2)U34)-methyltransferase. The FAD-dependent cmnm(5)s(2)U34 oxidoreductase stretch occupies residues Ile262–Lys654.

The protein in the N-terminal section; belongs to the methyltransferase superfamily. tRNA (mnm(5)s(2)U34)-methyltransferase family. In the C-terminal section; belongs to the DAO family. FAD serves as cofactor.

It is found in the cytoplasm. It carries out the reaction 5-aminomethyl-2-thiouridine(34) in tRNA + S-adenosyl-L-methionine = 5-methylaminomethyl-2-thiouridine(34) in tRNA + S-adenosyl-L-homocysteine + H(+). Its function is as follows. Catalyzes the last two steps in the biosynthesis of 5-methylaminomethyl-2-thiouridine (mnm(5)s(2)U) at the wobble position (U34) in tRNA. Catalyzes the FAD-dependent demodification of cmnm(5)s(2)U34 to nm(5)s(2)U34, followed by the transfer of a methyl group from S-adenosyl-L-methionine to nm(5)s(2)U34, to form mnm(5)s(2)U34. The protein is tRNA 5-methylaminomethyl-2-thiouridine biosynthesis bifunctional protein MnmC of Pseudomonas putida (strain GB-1).